Reading from the N-terminus, the 277-residue chain is Collectin-10 (277 aa).

Positions 1 to 27 (MNGFASLLRRNQFILLVLFLLQIQSLG) are cleaved as a signal peptide. Residues 40–107 (ATHTISPGPK…GDKGEKGLLG (68 aa)) are disordered. The segment covering 49–64 (KGDDGEKGDPGEEGKH) has biased composition (basic and acidic residues). In terms of domain architecture, Collagen-like spans 53-112 (GEKGDPGEEGKHGKVGRMGPKGIKGELGDMGDQGNIGKTGPIGKKGDKGEKGLLGIPGEK). In terms of domain architecture, C-type lectin spans 155 to 271 (TEEKFYYIVQ…CHLTMYFVCE (117 aa)). 2 disulfide bridges follow: cysteine 176–cysteine 270 and cysteine 248–cysteine 262. A glycan (N-linked (GlcNAc...) asparagine) is linked at asparagine 258.

The protein belongs to the COLEC10/COLEC11 family. As to expression, highly expressed in liver, placenta and adrenal gland. Moderately expressed in small intestine, lung, stomach and prostate. Weakly expressed in trachea and spleen.

Its subcellular location is the secreted. The protein resides in the golgi apparatus. It is found in the cytoplasm. In terms of biological role, lectin that binds to various sugars: galactose &gt; mannose = fucose &gt; N-acetylglucosamine &gt; N-acetylgalactosamine. Acts as a chemoattractant, probably involved in the regulation of cell migration. The protein is Collectin-10 (COLEC10) of Homo sapiens (Human).